Reading from the N-terminus, the 368-residue chain is Glutamate 5-kinase (368 aa).

An ATP-binding site is contributed by Lys-13. Residues Ser-54, Asp-141, and Asn-153 each contribute to the substrate site. An ATP-binding site is contributed by 173–174 (SD). Positions 278–355 (RGVITVDEGA…DEIEAILGYA (78 aa)) constitute a PUA domain.

Belongs to the glutamate 5-kinase family.

It localises to the cytoplasm. It carries out the reaction L-glutamate + ATP = L-glutamyl 5-phosphate + ADP. The protein operates within amino-acid biosynthesis; L-proline biosynthesis; L-glutamate 5-semialdehyde from L-glutamate: step 1/2. Catalyzes the transfer of a phosphate group to glutamate to form L-glutamate 5-phosphate. The protein is Glutamate 5-kinase of Ruegeria sp. (strain TM1040) (Silicibacter sp.).